A 1023-amino-acid polypeptide reads, in one-letter code: MANSQLDRVKGLIDSLNQHTKSAAKSGAGALKNGLGQVKQAGQKLILYIPKDYQASTGSSLNDLVKAAEALGIEVHRSEKNGTALAKELFGTTEKLLGFSERGIALFAPQFDKLLNKNQKLSKSLGGSSEALGQRLNKTQTALSALQSFLGTAIAGMDLDSLLRRRRNGEDVSGSELAKAGVDLAAQLVDNIASATGTVDAFAEQLGKLAMPYLTLALSGLASKLNNLPDLSLAGPGFDAVSGILSVVSASFILSNKDADAGTKAAAGIEISTKILGNIGKAVSQYIIAQRVAAGLSTTAATGGLIGSVVALAISPLSFLNVADKFERAKQLEQYSERFKKFGYEGDSLLASFYRETGAIEAALTTINSVLSARSAGVGAAATGSLVGAPVAALVSAITGIISGILDASKQAIFERVATKLANKIDEWEKKHGKNYFENGYDARHSAFLEDTFELLSQYNKEYSVERVVAITQQRWDVNIGELAGITRKGSDTKSGKAYVDFFEEGKLLEKEPDRFDKKVFDPLEGKIDLSSINKTTLLKFVTPVFTAGEEIRERKQTGKYQYMTELFVKGKEKWVVTGVQSHNAIYDYTNLIQLAIDKKGEKRQVTIESHLGEKNDRIYLSSGSSIVYAGNGHDVAYYDKTDTGYLTFDGQSAQKAGEYIVTKELKADVKVLKEVVKTQDISVGKTCSEKLEYRDYELSPFELGNGIRAKDELHSVEEIIGSNRKDKFFGSRFTDIFHGAKGDDEIYGNDGHDILYGDDGNDVIHGGDGNDHLVGGNGNDRLIGGKGNNFLNGGDGDDELQVFEGQYNVLLGGAGNDILYGSDGTNLFDGGVGNDKIYGGLGKDIYRYSKEYGRHIIIEKGGDDDTLLLSDLSFKDVGFIRIGDDLLVNKRIGGTLYYHEDYNGNALTIKDWFKEGKEGQNNKIEKIVDKDGAYVLSQYLTELTAPGRGINYFNGLEEKLYYGEGYNALPQLRKDIEQIISSTGAFTGDHGKVSVGSGGPLVYNNSANNVANSLSYSLAQAA.

Transmembrane regions (helical) follow at residues Asn-226–Asn-256, Ser-297–Phe-326, and Ile-367–Leu-406. Hemolysin-type calcium-binding repeat units lie at residues Phe-730–Ile-747, Tyr-748–Ile-765, His-766–Leu-783, Ile-784–Leu-801, Leu-812–Phe-829, and Asp-830–Tyr-847.

Belongs to the RTX prokaryotic toxin (TC 1.C.11) family. Palmitoylated by ApxIC. The toxin only becomes active when modified.

It is found in the secreted. The protein resides in the host cell membrane. One of the virulence factors of A.pleuropneumoniae, which has a strong hemolytic activity and is cytotoxic for alveolar macrophages and neutrophils. In Actinobacillus pleuropneumoniae (Haemophilus pleuropneumoniae), this protein is RTX-I toxin determinant A from serotypes 1/9 (apxIA).